The following is an 897-amino-acid chain: Interference hedgehog (897 aa).

A signal peptide spans 1–26; that stretch reads MSVTRGHKSTPSLLLLFLSVLTSLLA. Over 27-702 the chain is Extracellular; that stretch reads AIPVLQANAP…THNETFNMNP (676 aa). 4 Ig-like C2-type domains span residues 40–147, 148–235, 244–336, and 342–429; these read PGVR…ATIS, GDKI…RRLE, PSAA…YIQL, and PRIV…LQVN. Disulfide bonds link C63–C125, C169–C217, and C272–C320. Residues N96 and N99 are each glycosylated (N-linked (GlcNAc...) asparagine). N-linked (GlcNAc...) asparagine glycans are attached at residues N296, N351, N393, and N467. A disulfide bond links C363 and C411. Residues 434 to 468 form a disordered region; that stretch reads QAGDGMGTGGMGRSSNRNAHNRKQKQMVPPSAPNV. 2 consecutive Fibronectin type-III domains span residues 462–571 and 579–674; these read PPSA…LQRG and VPEL…TQRP. R498, K504, and K506 together coordinate heparin. N530 carries N-linked (GlcNAc...) asparagine glycosylation. R545 is a binding site for heparin. The N-linked (GlcNAc...) asparagine glycan is linked to N561. Polar residues predominate over residues 666–682; that stretch reads LKQGRTQRPRSSTTAQP. Residues 666-694 are disordered; that stretch reads LKQGRTQRPRSSTTAQPTMHTVDTTTPTH. Over residues 683 to 694 the composition is skewed to low complexity; it reads TMHTVDTTTPTH. N695 carries N-linked (GlcNAc...) asparagine glycosylation. Residues 703 to 723 traverse the membrane as a helical segment; that stretch reads LLTGTISGGALLILLVISACL. The Cytoplasmic segment spans residues 724–897; sequence CLCKRRHSRG…SSGSLNSVGV (174 aa). Disordered stretches follow at residues 773-793 and 819-849; these read AQQQQQQLQQQHQQDEKDSQD and MSSSSLRRSQRTLERAAAGGGSGGNNNNLNQ. Residues 774–784 are compositionally biased toward low complexity; the sequence is QQQQQQLQQQH.

The protein belongs to the immunoglobulin superfamily. IHOG family. As to quaternary structure, homodimer. Heterotetramer; 2 iHog chains bind 2 hh chains when facilitated by heparin, heparin is required to promote high-affinity interactions between hh and iHog.

The protein localises to the membrane. Mediates response to the active Hedgehog (Hh) protein signal in embryos, functioning upstream or at the level of patched (ptc). This Drosophila mojavensis (Fruit fly) protein is Interference hedgehog.